Here is a 732-residue protein sequence, read N- to C-terminus: MAEHPDLFSAPAQEAPEDLGLRAAALRAQLHQWAHQYYVLDAPTVPDAEYDRVFQALQALETAHPELVTPDSPTQRVIGAVMEGLTPVRHTVPMLSIRTETDTEASGAETFDARVRRELKLAPDAPPVEYVAEPKFDGLAMSLRYENGRLVQAATRGDGEVGEDVTHNIRTIRQIPLTLPTGGRYGVPPVLEVRGEVYMRRADFDRLNERQREAGGKTFVNPRNAAAGAVRQLDSGIAAQRPLSFFAYGLGDITPAAEGGPDFATHFDMLRQLKAWGFPVAAQVRTARGASELVAFHQEVGASRDQLPYDIDGVVYKVNSLALQRQLGFVTREPRWAVAHKYPAQEMVTRVEGIDVQVGRTGKLTPVARLAPVFVGGVTVTNATLHNLFEIRKKGVRVGDQVIVRRAGDVIPEVVGTVPAALLPVAGALQGSDALADAASGADGTAPGADAARAAPRSPYVPNFRMPRQCPICGSTVVREKGEANHRCTGGLFCPAQRKEALLHFAQRRAMDIEGLGEKLVDQLVEGQVIRTLPDLYRLGLTALSSLDRMAEKSAQNVLAALEKSKHTTLPRFLFGLGIRHVGEATAKDLARHFGGLDAIMDASVEQLLEVNDVGPVVAEAIHTFFAQPHNREVVEQLRACGVTWKEGPPAERATLPLAGKTFVLTGTLPTLSREDAKDRLEAAGAKVAGSVSRKTHYVVAGEEAGSKLAKAQELGVPVLDEAGMLALLQGR.

NAD(+) contacts are provided by residues 47–51 (DAEYD), 96–97 (SI), and Glu-133. Catalysis depends on Lys-135, which acts as the N6-AMP-lysine intermediate. Positions 156, 196, 317, and 341 each coordinate NAD(+). Zn(2+) is bound by residues Cys-470, Cys-473, Cys-488, and Cys-494. The BRCT domain maps to 653–732 (RATLPLAGKT…AGMLALLQGR (80 aa)).

It belongs to the NAD-dependent DNA ligase family. LigA subfamily. Requires Mg(2+) as cofactor. The cofactor is Mn(2+).

The enzyme catalyses NAD(+) + (deoxyribonucleotide)n-3'-hydroxyl + 5'-phospho-(deoxyribonucleotide)m = (deoxyribonucleotide)n+m + AMP + beta-nicotinamide D-nucleotide.. DNA ligase that catalyzes the formation of phosphodiester linkages between 5'-phosphoryl and 3'-hydroxyl groups in double-stranded DNA using NAD as a coenzyme and as the energy source for the reaction. It is essential for DNA replication and repair of damaged DNA. This chain is DNA ligase, found in Paracidovorax citrulli (strain AAC00-1) (Acidovorax citrulli).